Reading from the N-terminus, the 105-residue chain is Co-chaperonin GroES (105 aa).

Belongs to the GroES chaperonin family. As to quaternary structure, heptamer of 7 subunits arranged in a ring. Interacts with the chaperonin GroEL.

The protein localises to the cytoplasm. In terms of biological role, together with the chaperonin GroEL, plays an essential role in assisting protein folding. The GroEL-GroES system forms a nano-cage that allows encapsulation of the non-native substrate proteins and provides a physical environment optimized to promote and accelerate protein folding. GroES binds to the apical surface of the GroEL ring, thereby capping the opening of the GroEL channel. This is Co-chaperonin GroES from Methylovorus sp. (strain SS1 / DSM 11726).